A 225-amino-acid chain; its full sequence is UPF0758 protein Spea_3837 (225 aa).

Residues 102 to 224 (ILSDPDLTRD…IVSFAERGWI (123 aa)) enclose the MPN domain. Zn(2+) is bound by residues histidine 173, histidine 175, and aspartate 186. Positions 173–186 (HNHPSGIAEPSTAD) match the JAMM motif motif.

Belongs to the UPF0758 family.

In Shewanella pealeana (strain ATCC 700345 / ANG-SQ1), this protein is UPF0758 protein Spea_3837.